A 192-amino-acid polypeptide reads, in one-letter code: Orotate phosphoribosyltransferase (192 aa).

116 to 124 (EDIVTTGLS) serves as a coordination point for 5-phospho-alpha-D-ribose 1-diphosphate. 2 residues coordinate orotate: Thr-120 and Arg-148.

The protein belongs to the purine/pyrimidine phosphoribosyltransferase family. PyrE subfamily. In terms of assembly, homodimer. Requires Mg(2+) as cofactor.

It catalyses the reaction orotidine 5'-phosphate + diphosphate = orotate + 5-phospho-alpha-D-ribose 1-diphosphate. The protein operates within pyrimidine metabolism; UMP biosynthesis via de novo pathway; UMP from orotate: step 1/2. Catalyzes the transfer of a ribosyl phosphate group from 5-phosphoribose 1-diphosphate to orotate, leading to the formation of orotidine monophosphate (OMP). In Brucella canis (strain ATCC 23365 / NCTC 10854 / RM-666), this protein is Orotate phosphoribosyltransferase.